The sequence spans 1045 residues: Isoleucine--tRNA ligase (1045 aa).

A 'HIGH' region motif is present at residues 49-59 (PYCSGRIHLGT). Positions 591–595 (KMSKS) match the 'KMSKS' region motif. Lys594 contributes to the ATP binding site.

This sequence belongs to the class-I aminoacyl-tRNA synthetase family. IleS type 2 subfamily. Monomer. The cofactor is Zn(2+).

It localises to the cytoplasm. It catalyses the reaction tRNA(Ile) + L-isoleucine + ATP = L-isoleucyl-tRNA(Ile) + AMP + diphosphate. In terms of biological role, catalyzes the attachment of isoleucine to tRNA(Ile). As IleRS can inadvertently accommodate and process structurally similar amino acids such as valine, to avoid such errors it has two additional distinct tRNA(Ile)-dependent editing activities. One activity is designated as 'pretransfer' editing and involves the hydrolysis of activated Val-AMP. The other activity is designated 'posttransfer' editing and involves deacylation of mischarged Val-tRNA(Ile). The protein is Isoleucine--tRNA ligase of Methanothermobacter marburgensis (strain ATCC BAA-927 / DSM 2133 / JCM 14651 / NBRC 100331 / OCM 82 / Marburg) (Methanobacterium thermoautotrophicum).